We begin with the raw amino-acid sequence, 368 residues long: Protein HGH1 homolog (368 aa).

The protein belongs to the HGH1 family.

This Drosophila pseudoobscura pseudoobscura (Fruit fly) protein is Protein HGH1 homolog.